Consider the following 205-residue polypeptide: MRGKFITLEGIDGAGKTTHLRWLEYFLKERGKNVMVTREPGGTPLGEALRDILLDSRQTMHAETEALLMFAARREHLDKVILPALSRGEWVISDRFTDASFAYQGGGRGLSLQKLNELECWVQGEFQPDVTLYLDVSIASGRQRTSNIRQADRFEKEQDEFFRRVREAYLERAKEFPERIRVIDANQSLEDVRRSVEKSIATIYA.

10 to 17 (GIDGAGKT) contacts ATP.

This sequence belongs to the thymidylate kinase family.

It catalyses the reaction dTMP + ATP = dTDP + ADP. In terms of biological role, phosphorylation of dTMP to form dTDP in both de novo and salvage pathways of dTTP synthesis. The sequence is that of Thymidylate kinase from Nitrosospira multiformis (strain ATCC 25196 / NCIMB 11849 / C 71).